A 2382-amino-acid polypeptide reads, in one-letter code: Highly reducing polyketide synthase srdA (2382 aa).

A disordered region spans residues 1–25; it reads MAPHSTLDSDYSSGSSTPTSASAAG. The Ketosynthase family 3 (KS3) domain occupies 44–474; the sequence is QEPIAIIGMG…GANAHAILEA (431 aa). Residues cysteine 217, histidine 352, and histidine 390 each act as for beta-ketoacyl synthase activity in the active site. The tract at residues 580–891 is malonyl-CoA:ACP transacylase (MAT) domain; sequence VFTGQGAQWP…HYGSALSRGK (312 aa). The For malonyltransferase activity role is filled by serine 672. The N-terminal hotdog fold stretch occupies residues 971–1108; it reads HDLLGSQVHG…GLVKIDSAPA (138 aa). The segment at 971-1274 is dehydratase (DH) domain; the sequence is HDLLGSQVHG…RQVSYQSGIQ (304 aa). The region spanning 971–1275 is the PKS/mFAS DH domain; that stretch reads HDLLGSQVHG…QVSYQSGIQQ (305 aa). Histidine 1003 acts as the Proton acceptor; for dehydratase activity in catalysis. The segment at 1121–1275 is C-terminal hotdog fold; it reads MEPQAPRTWY…QVSYQSGIQQ (155 aa). Aspartate 1189 (proton donor; for dehydratase activity) is an active-site residue. The interval 1668 to 1979 is enoyl reductase (ER) domain; it reads GQIDSIFFRR…AKGHSGSVVV (312 aa). Positions 2004–2180 are ketoreductase (KR) domain; the sequence is SYLLVGCLGG…ATSIGLGMIS (177 aa). The region spanning 2298–2376 is the Carrier domain; the sequence is SVEDAVLKMI…LLSELITKKM (79 aa). Serine 2335 is modified (O-(pantetheine 4'-phosphoryl)serine).

In terms of biological role, highly reducing polyketide synthase; part of the gene cluster that mediates the biosynthesis of sordarial, a salicylic aldehyde structurally related to the phytotoxin pyriculol. The most interesting aspect of this pathway is formation of an aromatic product from the highly reducing polyketide synthase srdA. SrdA synthesizes a reduced polyketide chain from one molecule of acetyl-CoA and five molecules of malonyl-CoA. The polyketide chain is then reductively released as an aldehyde. The oxidoreductases srdC, srdD and srdE then oxidize one of the hydroxy groups to facilitate the intramolecular aldol condensation, followed by dehydration to yield a salicylic aldehyde. This aldehyde can undergo facile reduction by endogenous reductases to yield the alcohol 1-hydroxy-2-hydroxymethyl-3-pent-1,3-dienylbenzene. The flavin-dependent srdI counteract against the propensity of the aldehydes to be reduced under physiological conditions and is responsible for reoxidizing 1-hydroxy-2-hydroxymethyl-3-pent-1,3-dienylbenzene back to the salicylic aldehyde. This salicylic aldehyde is then selectively epoxidized by the cupin-domain-containing oxidoreductase srdB to yield the epoxide, which can be hydrolyzed stereoselectively by the hydrolase srdG to give the final product sordarial. This Neurospora crassa (strain ATCC 24698 / 74-OR23-1A / CBS 708.71 / DSM 1257 / FGSC 987) protein is Highly reducing polyketide synthase srdA.